Consider the following 320-residue polypeptide: MIDFRPFYQQIATTNLSAWLETLPLQLKQWEKTTHGDYAKWAKIVDFMPNSTACINLKDKVESIPHTPLSVGETKQLTHHLKQLMPWRKGPYHLHGIHIDTEWRSDFKWDRVLPHLAPLKDRTILDVGCGSGYHMWRMVGEGAKMVVGIDPTELFLCQFEVVRKLLGNDRRANLIPLGIEQMQPLAAFDTVFSMGVLYHRKSPLDHLLQLKAQLVKGGELVLETLVIDGDVNTCLVPADRYAKMKNVYFIPSIDCLINWLEKVGFKNVRCVDQAVTTLEEQRKTDWLENESLVDFLDPNDHSKTIEGYPAPKRAVILANA.

Residues lysine 89, tryptophan 103, lysine 108, glycine 128, 150-152, 179-180, methionine 194, tyrosine 198, and arginine 313 contribute to the carboxy-S-adenosyl-L-methionine site; these read DPT and IE.

It belongs to the class I-like SAM-binding methyltransferase superfamily. CmoB family. As to quaternary structure, homotetramer.

It catalyses the reaction carboxy-S-adenosyl-L-methionine + 5-hydroxyuridine(34) in tRNA = 5-carboxymethoxyuridine(34) in tRNA + S-adenosyl-L-homocysteine + H(+). Functionally, catalyzes carboxymethyl transfer from carboxy-S-adenosyl-L-methionine (Cx-SAM) to 5-hydroxyuridine (ho5U) to form 5-carboxymethoxyuridine (cmo5U) at position 34 in tRNAs. In Actinobacillus pleuropneumoniae serotype 7 (strain AP76), this protein is tRNA U34 carboxymethyltransferase.